The following is a 203-amino-acid chain: Small ribosomal subunit protein uS3 (203 aa).

The region spanning 39–113 is the KH type-2 domain; it reads IREIIRRNFL…NHVLNAKNIA (75 aa).

It belongs to the universal ribosomal protein uS3 family. As to quaternary structure, part of the 30S ribosomal subunit. Forms a tight complex with proteins S10 and S14.

In terms of biological role, binds the lower part of the 30S subunit head. Binds mRNA in the 70S ribosome, positioning it for translation. In Carsonella ruddii, this protein is Small ribosomal subunit protein uS3.